Here is a 199-residue protein sequence, read N- to C-terminus: Large ribosomal subunit protein uL13A (199 aa).

Ser2 is subject to N-acetylserine. A Glycyl lysine isopeptide (Lys-Gly) (interchain with G-Cter in ubiquitin) cross-link involves residue Lys177.

It belongs to the universal ribosomal protein uL13 family. As to quaternary structure, component of the large ribosomal subunit (LSU). Mature yeast ribosomes consist of a small (40S) and a large (60S) subunit. The 40S small subunit contains 1 molecule of ribosomal RNA (18S rRNA) and 33 different proteins (encoded by 57 genes). The large 60S subunit contains 3 rRNA molecules (25S, 5.8S and 5S rRNA) and 46 different proteins (encoded by 81 genes). N-terminally acetylated by acetyltransferase NatA.

The protein resides in the cytoplasm. Its function is as follows. Component of the ribosome, a large ribonucleoprotein complex responsible for the synthesis of proteins in the cell. The small ribosomal subunit (SSU) binds messenger RNAs (mRNAs) and translates the encoded message by selecting cognate aminoacyl-transfer RNA (tRNA) molecules. The large subunit (LSU) contains the ribosomal catalytic site termed the peptidyl transferase center (PTC), which catalyzes the formation of peptide bonds, thereby polymerizing the amino acids delivered by tRNAs into a polypeptide chain. The nascent polypeptides leave the ribosome through a tunnel in the LSU and interact with protein factors that function in enzymatic processing, targeting, and the membrane insertion of nascent chains at the exit of the ribosomal tunnel. The sequence is that of Large ribosomal subunit protein uL13A from Saccharomyces cerevisiae (strain ATCC 204508 / S288c) (Baker's yeast).